A 447-amino-acid chain; its full sequence is Rab GDP dissociation inhibitor alpha (447 aa).

S427 is subject to Phosphoserine.

The protein belongs to the Rab GDI family. In terms of assembly, interacts with RHOH. Interacts with the non-phosphorylated forms of RAB1A, RAB3A, RAB5A, RAB5B, RAB5C, RAB8A, RAB8B, RAB12, RAB35, and RAB43. Interacts with RAB10. High expression in brain, lower in other tissues.

It is found in the cytoplasm. It localises to the golgi apparatus. The protein localises to the trans-Golgi network. Its function is as follows. Regulates the GDP/GTP exchange reaction of most Rab proteins by inhibiting the dissociation of GDP from them, and the subsequent binding of GTP to them. Promotes the dissociation of GDP-bound Rab proteins from the membrane and inhibits their activation. Promotes the dissociation of RAB1A, RAB3A, RAB5A and RAB10 from membranes. This Mus musculus (Mouse) protein is Rab GDP dissociation inhibitor alpha (Gdi1).